Reading from the N-terminus, the 277-residue chain is Large ribosomal subunit protein uL2 (277 aa).

Disordered stretches follow at residues 36–55 and 213–277; these read PLPK…RHHG and WKGI…RKKK.

This sequence belongs to the universal ribosomal protein uL2 family. As to quaternary structure, part of the 50S ribosomal subunit. Forms a bridge to the 30S subunit in the 70S ribosome.

Functionally, one of the primary rRNA binding proteins. Required for association of the 30S and 50S subunits to form the 70S ribosome, for tRNA binding and peptide bond formation. It has been suggested to have peptidyltransferase activity; this is somewhat controversial. Makes several contacts with the 16S rRNA in the 70S ribosome. This chain is Large ribosomal subunit protein uL2, found in Staphylococcus aureus (strain bovine RF122 / ET3-1).